We begin with the raw amino-acid sequence, 1556 residues long: Disco-interacting protein 2 homolog C (1556 aa).

One can recognise a DMAP1-binding domain in the interval 7-120; it reads EGMALPLEVR…PMPSKRRSLV (114 aa). Disordered regions lie at residues 47-157 and 170-189; these read YLPQ…SQGS and GSTT…SGAA. Residues 81-93 show a composition bias toward basic and acidic residues; it reads GSRDERYRSDVHT. Polar residues-rich tracts occupy residues 120-136 and 144-157; these read VVQT…TSSG and QGDS…SQGS. The span at 170-183 shows a compositional bias: low complexity; sequence GSTTSTTSSSSTQS. The residue at position 264 (Thr264) is a Phosphothreonine.

It belongs to the DIP2 family.

This Homo sapiens (Human) protein is Disco-interacting protein 2 homolog C (DIP2C).